We begin with the raw amino-acid sequence, 450 residues long: UDP-N-acetylmuramoylalanine--D-glutamate ligase (450 aa).

119–125 (GSNGKTT) contributes to the ATP binding site.

The protein belongs to the MurCDEF family.

It is found in the cytoplasm. The catalysed reaction is UDP-N-acetyl-alpha-D-muramoyl-L-alanine + D-glutamate + ATP = UDP-N-acetyl-alpha-D-muramoyl-L-alanyl-D-glutamate + ADP + phosphate + H(+). Its pathway is cell wall biogenesis; peptidoglycan biosynthesis. Cell wall formation. Catalyzes the addition of glutamate to the nucleotide precursor UDP-N-acetylmuramoyl-L-alanine (UMA). The polypeptide is UDP-N-acetylmuramoylalanine--D-glutamate ligase (Streptococcus pneumoniae (strain Hungary19A-6)).